Consider the following 347-residue polypeptide: Protein RecA (347 aa).

66–73 (GPESSGKT) contacts ATP.

The protein belongs to the RecA family.

It localises to the cytoplasm. In terms of biological role, can catalyze the hydrolysis of ATP in the presence of single-stranded DNA, the ATP-dependent uptake of single-stranded DNA by duplex DNA, and the ATP-dependent hybridization of homologous single-stranded DNAs. It interacts with LexA causing its activation and leading to its autocatalytic cleavage. This Allochromatium vinosum (Chromatium vinosum) protein is Protein RecA.